The sequence spans 377 residues: Queuine tRNA-ribosyltransferase (377 aa).

Asp-89 (proton acceptor) is an active-site residue. Substrate-binding positions include 89–93, Asp-143, Gln-188, and Gly-215; that span reads DSGGF. The interval 246-252 is RNA binding; it reads GVGKPED. Asp-265 functions as the Nucleophile in the catalytic mechanism. The interval 270–274 is RNA binding; important for wobble base 34 recognition; that stretch reads TRNAR. 4 residues coordinate Zn(2+): Cys-303, Cys-305, Cys-308, and His-334.

This sequence belongs to the queuine tRNA-ribosyltransferase family. In terms of assembly, homodimer. Within each dimer, one monomer is responsible for RNA recognition and catalysis, while the other monomer binds to the replacement base PreQ1. The cofactor is Zn(2+).

The enzyme catalyses 7-aminomethyl-7-carbaguanine + guanosine(34) in tRNA = 7-aminomethyl-7-carbaguanosine(34) in tRNA + guanine. It participates in tRNA modification; tRNA-queuosine biosynthesis. Functionally, catalyzes the base-exchange of a guanine (G) residue with the queuine precursor 7-aminomethyl-7-deazaguanine (PreQ1) at position 34 (anticodon wobble position) in tRNAs with GU(N) anticodons (tRNA-Asp, -Asn, -His and -Tyr). Catalysis occurs through a double-displacement mechanism. The nucleophile active site attacks the C1' of nucleotide 34 to detach the guanine base from the RNA, forming a covalent enzyme-RNA intermediate. The proton acceptor active site deprotonates the incoming PreQ1, allowing a nucleophilic attack on the C1' of the ribose to form the product. After dissociation, two additional enzymatic reactions on the tRNA convert PreQ1 to queuine (Q), resulting in the hypermodified nucleoside queuosine (7-(((4,5-cis-dihydroxy-2-cyclopenten-1-yl)amino)methyl)-7-deazaguanosine). The protein is Queuine tRNA-ribosyltransferase of Acinetobacter baumannii (strain SDF).